The sequence spans 203 residues: MLTEQQRRELDWEKTDGLMPAIVQHAVSGEVLTLGYMNPQALDKTIESGHVTFFSRTKQRLWTKGETSGHVLNVVSIAPDCDNDTLLVLANPVGPTCHKGTSSCFGDASHQWLFLYQLEQLLAERKTADPASSYTAKLYASGTKRIAQKVGEEGVETALAATVNDRFELTNEASDLMYHLLVLLQDQDLNLTTVIDDLRKRHQ.

The interval 1–114 is phosphoribosyl-AMP cyclohydrolase; it reads MLTEQQRREL…FGDASHQWLF (114 aa). Residues 115-203 are phosphoribosyl-ATP pyrophosphohydrolase; the sequence is LYQLEQLLAE…VIDDLRKRHQ (89 aa).

The protein in the N-terminal section; belongs to the PRA-CH family. It in the C-terminal section; belongs to the PRA-PH family.

It localises to the cytoplasm. It carries out the reaction 1-(5-phospho-beta-D-ribosyl)-ATP + H2O = 1-(5-phospho-beta-D-ribosyl)-5'-AMP + diphosphate + H(+). The catalysed reaction is 1-(5-phospho-beta-D-ribosyl)-5'-AMP + H2O = 1-(5-phospho-beta-D-ribosyl)-5-[(5-phospho-beta-D-ribosylamino)methylideneamino]imidazole-4-carboxamide. The protein operates within amino-acid biosynthesis; L-histidine biosynthesis; L-histidine from 5-phospho-alpha-D-ribose 1-diphosphate: step 2/9. It participates in amino-acid biosynthesis; L-histidine biosynthesis; L-histidine from 5-phospho-alpha-D-ribose 1-diphosphate: step 3/9. The polypeptide is Histidine biosynthesis bifunctional protein HisIE (hisI) (Salmonella typhi).